A 243-amino-acid chain; its full sequence is tRNA (guanine-N(1)-)-methyltransferase (243 aa).

Residues Gly113 and 133–138 (IGDFVL) each bind S-adenosyl-L-methionine.

This sequence belongs to the RNA methyltransferase TrmD family. As to quaternary structure, homodimer.

It localises to the cytoplasm. The enzyme catalyses guanosine(37) in tRNA + S-adenosyl-L-methionine = N(1)-methylguanosine(37) in tRNA + S-adenosyl-L-homocysteine + H(+). Its function is as follows. Specifically methylates guanosine-37 in various tRNAs. The protein is tRNA (guanine-N(1)-)-methyltransferase of Bacillus velezensis (strain DSM 23117 / BGSC 10A6 / LMG 26770 / FZB42) (Bacillus amyloliquefaciens subsp. plantarum).